A 496-amino-acid chain; its full sequence is Lysine--tRNA ligase (496 aa).

Positions 405 and 412 each coordinate Mg(2+).

This sequence belongs to the class-II aminoacyl-tRNA synthetase family. Homodimer. The cofactor is Mg(2+).

The protein localises to the cytoplasm. The catalysed reaction is tRNA(Lys) + L-lysine + ATP = L-lysyl-tRNA(Lys) + AMP + diphosphate. The sequence is that of Lysine--tRNA ligase from Vesicomyosocius okutanii subsp. Calyptogena okutanii (strain HA).